The sequence spans 227 residues: Cytochrome c oxidase subunit 2 (227 aa).

Over 1 to 14 the chain is Mitochondrial intermembrane; the sequence is MAYPFQMGLQDATS. A helical transmembrane segment spans residues 15–45; it reads PIMEELLHFHDHTLMIVFLISSLVLYIISLM. Topologically, residues 46–59 are mitochondrial matrix; sequence LTTKLTHTSTMDAQ. Residues 60 to 87 form a helical membrane-spanning segment; the sequence is EVETIWTILPAIILILIALPSLRILYMM. Topologically, residues 88-227 are mitochondrial intermembrane; it reads DEINNPSLTV…HFEKWSASLL (140 aa). The Cu cation site is built by histidine 161, cysteine 196, glutamate 198, cysteine 200, histidine 204, and methionine 207. Glutamate 198 contacts Mg(2+).

It belongs to the cytochrome c oxidase subunit 2 family. In terms of assembly, component of the cytochrome c oxidase (complex IV, CIV), a multisubunit enzyme composed of 14 subunits. The complex is composed of a catalytic core of 3 subunits MT-CO1, MT-CO2 and MT-CO3, encoded in the mitochondrial DNA, and 11 supernumerary subunits COX4I, COX5A, COX5B, COX6A, COX6B, COX6C, COX7A, COX7B, COX7C, COX8 and NDUFA4, which are encoded in the nuclear genome. The complex exists as a monomer or a dimer and forms supercomplexes (SCs) in the inner mitochondrial membrane with NADH-ubiquinone oxidoreductase (complex I, CI) and ubiquinol-cytochrome c oxidoreductase (cytochrome b-c1 complex, complex III, CIII), resulting in different assemblies (supercomplex SCI(1)III(2)IV(1) and megacomplex MCI(2)III(2)IV(2)). Found in a complex with TMEM177, COA6, COX18, COX20, SCO1 and SCO2. Interacts with TMEM177 in a COX20-dependent manner. Interacts with COX20. Interacts with COX16. The cofactor is Cu cation.

The protein resides in the mitochondrion inner membrane. It carries out the reaction 4 Fe(II)-[cytochrome c] + O2 + 8 H(+)(in) = 4 Fe(III)-[cytochrome c] + 2 H2O + 4 H(+)(out). Its function is as follows. Component of the cytochrome c oxidase, the last enzyme in the mitochondrial electron transport chain which drives oxidative phosphorylation. The respiratory chain contains 3 multisubunit complexes succinate dehydrogenase (complex II, CII), ubiquinol-cytochrome c oxidoreductase (cytochrome b-c1 complex, complex III, CIII) and cytochrome c oxidase (complex IV, CIV), that cooperate to transfer electrons derived from NADH and succinate to molecular oxygen, creating an electrochemical gradient over the inner membrane that drives transmembrane transport and the ATP synthase. Cytochrome c oxidase is the component of the respiratory chain that catalyzes the reduction of oxygen to water. Electrons originating from reduced cytochrome c in the intermembrane space (IMS) are transferred via the dinuclear copper A center (CU(A)) of subunit 2 and heme A of subunit 1 to the active site in subunit 1, a binuclear center (BNC) formed by heme A3 and copper B (CU(B)). The BNC reduces molecular oxygen to 2 water molecules using 4 electrons from cytochrome c in the IMS and 4 protons from the mitochondrial matrix. This is Cytochrome c oxidase subunit 2 (MT-CO2) from Ailurus fulgens (Himalayan red panda).